The following is a 1040-amino-acid chain: Multidrug resistance protein MdtB (1040 aa).

A run of 12 helical transmembrane segments spans residues 16–36 (FIMRPVATTLLMVAILLAGII), 347–367 (LMMAIALVVMIIYLFLRNIPA), 369–389 (IIPGVAVPLSLIGTFAVMVFL), 396–416 (LTLMALTIATGFVVDDAIVVI), 440–460 (IGFTIISLTFSLIAVLIPLLF), 472–492 (FAITLAVAILISAVVSLTLTP), 537–557 (WLTLSVALSTLLLSVLLWVFI), 863–883 (LGSTVWLIVAAVVAMYIVLGI), 888–908 (FIHPITILSTLPTAGVGALLA), 911–931 (IAGSELDVIAIIGIILLIGIV), 968–988 (ILMTTLAALLGALPLMLSTGV), and 998–1018 (IGMVGGLIVSQVLTLFTTPVI).

Belongs to the resistance-nodulation-cell division (RND) (TC 2.A.6) family. MdtB subfamily. Part of a tripartite efflux system composed of MdtA, MdtB and MdtC. MdtB forms a heteromultimer with MdtC.

It localises to the cell inner membrane. In terms of biological role, the MdtABC tripartite complex confers resistance against novobiocin and deoxycholate. The sequence is that of Multidrug resistance protein MdtB from Escherichia coli (strain 55989 / EAEC).